The primary structure comprises 221 residues: Chalcone--flavanone isomerase (221 aa).

Substrate-binding residues include Thr50, Asn115, and Thr192.

The protein belongs to the chalcone isomerase family.

It carries out the reaction a chalcone = a flavanone.. The protein operates within secondary metabolite biosynthesis; flavonoid biosynthesis. In terms of biological role, catalyzes the intramolecular cyclization of bicyclic chalcones into tricyclic (S)-flavanones. Responsible for the isomerization of 4,2',4',6'-tetrahydroxychalcone (also termed chalcone) into naringenin. The polypeptide is Chalcone--flavanone isomerase (CHI) (Phaseolus vulgaris (Kidney bean)).